A 322-amino-acid polypeptide reads, in one-letter code: Lactamase-like protein nscB (322 aa).

4 residues coordinate Zn(2+): His-97, His-99, Asp-101, and His-102. Catalysis depends on Asp-101, which acts as the Proton donor/acceptor.

This sequence belongs to the metallo-beta-lactamase superfamily. The cofactor is Zn(2+).

Its pathway is secondary metabolite biosynthesis. In terms of biological role, lactamase-like protein; part of the gene cluster that mediates the biosynthesis of neosartoricin B, a prenylated anthracenone that probably exhibits T-cell antiproliferative activity, suggestive of a physiological role as an immunosuppressive agent. The non-reducing polyketide synthase nscA probably synthesizes and cyclizes the decaketide backbone. The hydrolase nscB then mediates the product release through hydrolysis followed by spontaneous decarboxylation. The prenyltransferase nscD catalyzes the addition of the dimethylallyl group to the aromatic C5. The FAD-dependent monooxygenase nscC is then responsible for the stereospecific hydroxylation at C2. Neosartoricin B can be converted into two additional compounds neosartoricins C and D. Neosartoricin C is a spirocyclic compound that is cyclized through the attack of C3 hydroxyl on C14, followed by dehydration. On the other hand, neosartoricin D is a further cyclized compound in which attack of C2 on C14 in neosartoricin C results in the formation of the acetal-containing dioxabicyclo-octanone ring. Both of these compounds are novel and possibly represent related metabolites of the gene cluster. This Trichophyton rubrum (strain ATCC MYA-4607 / CBS 118892) (Athlete's foot fungus) protein is Lactamase-like protein nscB.